The primary structure comprises 368 residues: Phosphate acyltransferase (368 aa).

The interval 335 to 368 (VSLGDGEHDAGGAGHTGPAAGQHAEPPAAQSSKA) is disordered.

This sequence belongs to the PlsX family. As to quaternary structure, homodimer. Probably interacts with PlsY.

The protein resides in the cytoplasm. It carries out the reaction a fatty acyl-[ACP] + phosphate = an acyl phosphate + holo-[ACP]. The protein operates within lipid metabolism; phospholipid metabolism. Its function is as follows. Catalyzes the reversible formation of acyl-phosphate (acyl-PO(4)) from acyl-[acyl-carrier-protein] (acyl-ACP). This enzyme utilizes acyl-ACP as fatty acyl donor, but not acyl-CoA. The sequence is that of Phosphate acyltransferase from Burkholderia vietnamiensis (strain G4 / LMG 22486) (Burkholderia cepacia (strain R1808)).